We begin with the raw amino-acid sequence, 479 residues long: Ribulose bisphosphate carboxylase large chain 2 (479 aa).

The substrate site is built by Asn-116 and Thr-166. The Proton acceptor role is filled by Lys-168. Lys-170 serves as a coordination point for substrate. 3 residues coordinate Mg(2+): Lys-194, Asp-196, and Glu-197. At Lys-194 the chain carries N6-carboxylysine. The Proton acceptor role is filled by His-287. Substrate is bound by residues Arg-288, His-320, and Ser-372.

Belongs to the RuBisCO large chain family. Type I subfamily. In terms of assembly, heterohexadecamer of 8 large chains and 8 small chains. Mg(2+) is required as a cofactor.

The enzyme catalyses 2 (2R)-3-phosphoglycerate + 2 H(+) = D-ribulose 1,5-bisphosphate + CO2 + H2O. It catalyses the reaction D-ribulose 1,5-bisphosphate + O2 = 2-phosphoglycolate + (2R)-3-phosphoglycerate + 2 H(+). In terms of biological role, ruBisCO catalyzes two reactions: the carboxylation of D-ribulose 1,5-bisphosphate, the primary event in carbon dioxide fixation, as well as the oxidative fragmentation of the pentose substrate. Both reactions occur simultaneously and in competition at the same active site. In Bradyrhizobium sp. (strain BTAi1 / ATCC BAA-1182), this protein is Ribulose bisphosphate carboxylase large chain 2.